Consider the following 241-residue polypeptide: MSKTRGSLFVRLRRLALRAILAVLGVWIAGILLFSVMPVPFSAVMVERQFSAWFSGDFRYVAHSDWVSMDEISPWMGLAVIAAEDQTFPEHWGFDVAAIQKAVAHNENSRRIRGASTLSQQTAKNLFLWDGRSWVRKGLEAGLTLGIETVWSKRRILTVYLNIAEFGDGVFGVEEASQRYFNKPASRLSASEAALLAAVLPNPLRYKASAPSGYVRARQQWILRQMRQLGGEGFMAQHKLR.

The helical transmembrane segment at 19 to 39 (AILAVLGVWIAGILLFSVMPV) threads the bilayer.

Belongs to the glycosyltransferase 51 family.

Its subcellular location is the cell inner membrane. It carries out the reaction [GlcNAc-(1-&gt;4)-Mur2Ac(oyl-L-Ala-gamma-D-Glu-L-Lys-D-Ala-D-Ala)](n)-di-trans,octa-cis-undecaprenyl diphosphate + beta-D-GlcNAc-(1-&gt;4)-Mur2Ac(oyl-L-Ala-gamma-D-Glu-L-Lys-D-Ala-D-Ala)-di-trans,octa-cis-undecaprenyl diphosphate = [GlcNAc-(1-&gt;4)-Mur2Ac(oyl-L-Ala-gamma-D-Glu-L-Lys-D-Ala-D-Ala)](n+1)-di-trans,octa-cis-undecaprenyl diphosphate + di-trans,octa-cis-undecaprenyl diphosphate + H(+). Its pathway is cell wall biogenesis; peptidoglycan biosynthesis. Functionally, peptidoglycan polymerase that catalyzes glycan chain elongation from lipid-linked precursors. This Cronobacter sakazakii (strain ATCC BAA-894) (Enterobacter sakazakii) protein is Biosynthetic peptidoglycan transglycosylase.